The chain runs to 461 residues: Metacaspase-1 (461 aa).

Composition is skewed to gly residues over residues Met1–Gly21, Gln45–Pro66, Gln74–Pro86, and Pro105–Gly119. Residues Met1–Thr154 form a disordered region. Low complexity-rich tracts occupy residues Gly121–Gln131 and His138–Asn148. Residues His252 and Cys308 contribute to the active site.

The protein belongs to the peptidase C14B family.

Functionally, involved in cell death (apoptosis). The polypeptide is Metacaspase-1 (MCA1) (Yarrowia lipolytica (strain CLIB 122 / E 150) (Yeast)).